The primary structure comprises 542 residues: Importin subunit alpha-1 (542 aa).

The interval 1–29 is disordered; sequence MSASSRFIPEHRRQNYKGKGTFQADELRR. One can recognise an IBB domain in the interval 1–60; it reads MSASSRFIPEHRRQNYKGKGTFQADELRRRRETQQIEIRKQKREENLNKRRNLVDVQEPA. ARM repeat units follow at residues 114-155, 156-197, 198-240, 241-282, 283-324, 325-366, 367-408, and 409-453; these read IQKV…SSNQ, THVV…SPMC, RDHV…KNPQ, PDWN…ANEK, IQAI…DDVQ, TQVI…NSSQ, IQYV…GARR, and PDQI…GELD.

This sequence belongs to the importin alpha family. Interacts with pap1.

It is found in the nucleus. Functionally, binds specifically and directly to substrates containing either a simple or bipartite NLS motif. Promotes docking of import substrates to the nuclear envelope. Seems to act as a cytosolic receptor for both simple and bipartite NLS motifs. Has an essential role in mitotic chromosome condensation. Involved in nuclear protein import. Required for efficient nuclear import of both an SV40 nuclear localization signal-containing reporter protein and the pap1 component of the stress response MAP kinase pathway. Required for proper mitotic progression. In Schizosaccharomyces pombe (strain 972 / ATCC 24843) (Fission yeast), this protein is Importin subunit alpha-1 (cut15).